Consider the following 22-residue polypeptide: Fuctinin-2 (22 aa).

The disordered stretch occupies residues 1–22 (ELPGLPKGEKEQQEAIEHIDEV). The span at 7–22 (KGEKEQQEAIEHIDEV) shows a compositional bias: basic and acidic residues.

This sequence to human SET/PHAPII protein. As to quaternary structure, oligomer.

The protein resides in the cytoplasm. Has a role in the physiological regulation of fucosylation processes. The protein is Fuctinin-2 of Rattus norvegicus (Rat).